The sequence spans 906 residues: MPLRLDIKRKLTARSDRVKSVDLHPTEPWMLASLYNGSVCVWNHETQTLVKTFEVCDLPVRAAKFVARKNWVVTGADDMQIRVFNYNTLERVHMFEAHSDYIRCIAVHPTQPFILTSSDDMLIKLWDWDKKWSCSQVFEGHTHYVMQIVINPKDNNQFASASLDRTIKVWQLGSSSPNFTLEGHEKGVNCIDYYSGGDKPYLISGADDRLVKIWDYQNKTCVQTLEGHAQNVSCASFHPELPIIITGSEDGTVRIWHSSTYRLESTLNYGMERVWCVASLRGSNNVALGYDEGSIIVKLGREEPAMSMDANGKIIWAKHSEVQQANLKAMGDAEIKDGERLPLAVKDMGSCEIYPQTIQHNPNGRFVVVCGDGEYIIYTAMALRNKSFGSAQEFAWAHDSSEYAIRESNSIVKIFKNFKEKKSFKPDFGAESIYGGFLLGVRSVNGLAFYDWDNTELIRRIEIQPKHIFWSDSGELVCIATEESFFILKYLSEKVLAAQETHEGVTEDGIEDAFEVLGEIQEIVKTGLWVGDCFIYTSSVNRLNYYVGGEIVTIAHLDRTMYLLGYIPKDNRLYLGDKELNIISYSLLVSVLEYQTAVMRRDFSMADKVLPTIPKEQRTRVAHFLEKQGFKQQALTVSTDPEHRFELALQLGELKIAYQLAVEAESEQKWKQLAELAISKCQFGLAQECLHHAQDYGGLLLLATASGNANMVNKLAEGAERDGKNNVAFMSYFLQGKVDACLELLIRTGRLPEAAFLARTYLPSQVSRVVKLWRENLSKVNQKAAESLADPTEYENLFPGLKEAFVVEEWVKETHADLWPAKQYPLVTPNEERNVMEEGKDFQPSRSTAQQELDGKPASPTPVIVASHTANKEEKSLLELEVDLDNLELEDIDTTDINLDEDILDD.

WD repeat units lie at residues 13-52 (ARSDRVKSVDLHPTEPWMLASLYNGSVCVWNHETQTLVKT), 55-94 (VCDLPVRAAKFVARKNWVVTGADDMQIRVFNYNTLERVHM), 97-136 (AHSDYIRCIAVHPTQPFILTSSDDMLIKLWDWDKKWSCSQ), 140-180 (GHTH…PNFT), 183-224 (GHEK…CVQT), and 227-266 (GHAQNVSCASFHPELPIIITGSEDGTVRIWHSSTYRLEST). At Lys-627 the chain carries N6-acetyllysine. Residues 837 to 870 (EEGKDFQPSRSTAQQELDGKPASPTPVIVASHTA) are disordered. At Ser-859 the chain carries Phosphoserine. Thr-861 carries the phosphothreonine modification. Residues 866 to 891 (ASHTANKEEKSLLELEVDLDNLELED) adopt a coiled-coil conformation.

The protein belongs to the WD repeat COPB2 family. Oligomeric complex that consists of at least the alpha, beta, beta', gamma, delta, epsilon and zeta subunits. Probably interacts with PEX11A. Interacts with SCYL1. Interacts with JAGN1.

It is found in the cytoplasm. The protein resides in the cytosol. It localises to the golgi apparatus membrane. Its subcellular location is the cytoplasmic vesicle. The protein localises to the COPI-coated vesicle membrane. Its function is as follows. The coatomer is a cytosolic protein complex that binds to dilysine motifs and reversibly associates with Golgi non-clathrin-coated vesicles, which further mediate biosynthetic protein transport from the ER, via the Golgi up to the trans Golgi network. Coatomer complex is required for budding from Golgi membranes, and is essential for the retrograde Golgi-to-ER transport of dilysine-tagged proteins. In mammals, the coatomer can only be recruited by membranes associated to ADP-ribosylation factors (ARFs), which are small GTP-binding proteins; the complex also influences the Golgi structural integrity, as well as the processing, activity, and endocytic recycling of LDL receptors. This coatomer complex protein, essential for Golgi budding and vesicular trafficking, is a selective binding protein (RACK) for protein kinase C, epsilon type. It binds to Golgi membranes in a GTP-dependent manner. This is Coatomer subunit beta' (COPB2) from Homo sapiens (Human).